Consider the following 387-residue polypeptide: Methionine aminopeptidase 1 (387 aa).

Position 2 is an N-acetylserine (S2). Residues 2 to 10 (STATTTVTT) constitute a propeptide that is removed on maturation. Residues 19-73 (KIYCSGLQCGRETSSQMKCPVCLKQGIVSIFCDTSCYENNYKAHKALHNAKDGLE) form a C6H2-type zinc finger. The Zn(2+) site is built by C22, C27, C37, C40, C50, C54, H62, and H66. Residue H202 participates in a protein binding. 3 residues coordinate Zn(2+): D219, D230, and H294. H301 is an a protein binding site. Zn(2+)-binding residues include E327 and E358.

This sequence belongs to the peptidase M24A family. Methionine aminopeptidase type 1 subfamily. In terms of assembly, associates with the 60S ribosomal subunit of the 80S translational complex. Requires Zn(2+) as cofactor. It depends on Co(2+) as a cofactor. Mn(2+) is required as a cofactor. Fe(2+) serves as cofactor.

The protein resides in the cytoplasm. It carries out the reaction Release of N-terminal amino acids, preferentially methionine, from peptides and arylamides.. Its activity is regulated as follows. In contract to the MetAP 2 isoform, is not inhibited by the fungal metabolite fumagillin, an antiangiogenic drug. Its function is as follows. Cotranslationally removes the N-terminal methionine from nascent proteins. The N-terminal methionine is often cleaved when the second residue in the primary sequence is small and uncharged (Met-Ala-, Cys, Gly, Pro, Ser, Thr, or Val). Plays the major role in N-terminal methionine removal. Less efficient when the second residue is Val. This chain is Methionine aminopeptidase 1 (MAP1), found in Saccharomyces cerevisiae (strain ATCC 204508 / S288c) (Baker's yeast).